Consider the following 159-residue polypeptide: MQCPSCQNTDSRVLESRSADSGRSVRRRRECLNCDFRFTTYERVETTPINVLKRSGAKELFNRSKIINGLNRACEKTLIHGSKIEFIVDEIELELHQGVCKEIKSIEIGEMVLTHLKDINEVAYIRFASVYRQFNGINDFMKTLEALKPIKKEQLASVI.

Positions 1-11 (MQCPSCQNTDS) are enriched in polar residues. A disordered region spans residues 1 to 20 (MQCPSCQNTDSRVLESRSAD). A zinc finger lies at 3–34 (CPSCQNTDSRVLESRSADSGRSVRRRRECLNC). The ATP-cone domain occupies 49–139 (INVLKRSGAK…VYRQFNGIND (91 aa)).

Belongs to the NrdR family. Zn(2+) is required as a cofactor.

In terms of biological role, negatively regulates transcription of bacterial ribonucleotide reductase nrd genes and operons by binding to NrdR-boxes. This Prochlorococcus marinus (strain NATL1A) protein is Transcriptional repressor NrdR.